Here is a 68-residue protein sequence, read N- to C-terminus: Large ribosomal subunit protein uL29 (68 aa).

It belongs to the universal ribosomal protein uL29 family.

The protein is Large ribosomal subunit protein uL29 (rpl29) of Thermoplasma acidophilum (strain ATCC 25905 / DSM 1728 / JCM 9062 / NBRC 15155 / AMRC-C165).